The following is a 558-amino-acid chain: Dihydroxy-acid dehydratase (558 aa).

C49 serves as a coordination point for [2Fe-2S] cluster. D81 contributes to the Mg(2+) binding site. [2Fe-2S] cluster is bound at residue C122. The Mg(2+) site is built by D123 and K124. The residue at position 124 (K124) is an N6-carboxylysine. A [2Fe-2S] cluster-binding site is contributed by C194. Residue E446 coordinates Mg(2+). The active-site Proton acceptor is the S472.

This sequence belongs to the IlvD/Edd family. In terms of assembly, homodimer. [2Fe-2S] cluster serves as cofactor. The cofactor is Mg(2+).

The catalysed reaction is (2R)-2,3-dihydroxy-3-methylbutanoate = 3-methyl-2-oxobutanoate + H2O. The enzyme catalyses (2R,3R)-2,3-dihydroxy-3-methylpentanoate = (S)-3-methyl-2-oxopentanoate + H2O. Its pathway is amino-acid biosynthesis; L-isoleucine biosynthesis; L-isoleucine from 2-oxobutanoate: step 3/4. It participates in amino-acid biosynthesis; L-valine biosynthesis; L-valine from pyruvate: step 3/4. Its function is as follows. Functions in the biosynthesis of branched-chain amino acids. Catalyzes the dehydration of (2R,3R)-2,3-dihydroxy-3-methylpentanoate (2,3-dihydroxy-3-methylvalerate) into 2-oxo-3-methylpentanoate (2-oxo-3-methylvalerate) and of (2R)-2,3-dihydroxy-3-methylbutanoate (2,3-dihydroxyisovalerate) into 2-oxo-3-methylbutanoate (2-oxoisovalerate), the penultimate precursor to L-isoleucine and L-valine, respectively. In Synechococcus sp. (strain RCC307), this protein is Dihydroxy-acid dehydratase.